The sequence spans 140 residues: Protein archease (140 aa).

3 residues coordinate Ca(2+): Asp11, Asp139, and Leu140.

It belongs to the archease family.

Functionally, activates the tRNA-splicing ligase complex by facilitating the enzymatic turnover of catalytic subunit RtcB. Acts by promoting the guanylylation of RtcB, a key intermediate step in tRNA ligation. Can also alter the NTP specificity of RtcB such that ATP, dGTP or ITP is used efficiently. The sequence is that of Protein archease from Methanopyrus kandleri (strain AV19 / DSM 6324 / JCM 9639 / NBRC 100938).